We begin with the raw amino-acid sequence, 353 residues long: Photosystem II protein D1 (353 aa).

The residue at position 2 (Thr-2) is an N-acetylthreonine. At Thr-2 the chain carries Phosphothreonine. The next 3 helical transmembrane spans lie at 29-46, 118-133, and 142-156; these read YIGWFGVLMIPTLLTATS, HFLLGVACYMGREWEL, and WIAVAYSAPVAAATA. His-118 provides a ligand contact to chlorophyll a. Tyr-126 contributes to the pheophytin a binding site. Residues Asp-170 and Glu-189 each coordinate [CaMn4O5] cluster. A helical membrane pass occupies residues 197–218; the sequence is FHMLGVAGVFGGSLFSAMHGSL. His-198 lines the chlorophyll a pocket. A quinone-binding positions include His-215 and 264–265; that span reads SF. His-215 provides a ligand contact to Fe cation. Residue His-272 participates in Fe cation binding. A helical transmembrane segment spans residues 274–288; the sequence is FLAAWPVVGIWFTAL. 4 residues coordinate [CaMn4O5] cluster: His-332, Glu-333, Asp-342, and Ala-344. Positions 345 to 353 are excised as a propeptide; sequence SVEAPSTNG.

Belongs to the reaction center PufL/M/PsbA/D family. In terms of assembly, PSII is composed of 1 copy each of membrane proteins PsbA, PsbB, PsbC, PsbD, PsbE, PsbF, PsbH, PsbI, PsbJ, PsbK, PsbL, PsbM, PsbT, PsbX, PsbY, PsbZ, Psb30/Ycf12, at least 3 peripheral proteins of the oxygen-evolving complex and a large number of cofactors. It forms dimeric complexes. The cofactor is The D1/D2 heterodimer binds P680, chlorophylls that are the primary electron donor of PSII, and subsequent electron acceptors. It shares a non-heme iron and each subunit binds pheophytin, quinone, additional chlorophylls, carotenoids and lipids. D1 provides most of the ligands for the Mn4-Ca-O5 cluster of the oxygen-evolving complex (OEC). There is also a Cl(-1) ion associated with D1 and D2, which is required for oxygen evolution. The PSII complex binds additional chlorophylls, carotenoids and specific lipids.. Post-translationally, tyr-161 forms a radical intermediate that is referred to as redox-active TyrZ, YZ or Y-Z. In terms of processing, C-terminally processed by CTPA; processing is essential to allow assembly of the oxygen-evolving complex and thus photosynthetic growth.

The protein resides in the plastid. The protein localises to the chloroplast thylakoid membrane. It carries out the reaction 2 a plastoquinone + 4 hnu + 2 H2O = 2 a plastoquinol + O2. Functionally, photosystem II (PSII) is a light-driven water:plastoquinone oxidoreductase that uses light energy to abstract electrons from H(2)O, generating O(2) and a proton gradient subsequently used for ATP formation. It consists of a core antenna complex that captures photons, and an electron transfer chain that converts photonic excitation into a charge separation. The D1/D2 (PsbA/PsbD) reaction center heterodimer binds P680, the primary electron donor of PSII as well as several subsequent electron acceptors. The sequence is that of Photosystem II protein D1 from Acorus calamus (Sweet flag).